Here is a 132-residue protein sequence, read N- to C-terminus: UPF0299 membrane protein YohJ (132 aa).

Transmembrane regions (helical) follow at residues 5–25 (LNIIWQYLRAFVLIYACLYAG), 26–46 (IFIASLLPVTIPGSIIGMLIL), 63–83 (GCYVLIRYMALLFVPIGVGVM), and 93–113 (FGPVVVSCAVSTLVVFLVVSW).

Belongs to the UPF0299 family.

The protein resides in the cell inner membrane. In Shigella flexneri serotype 5b (strain 8401), this protein is UPF0299 membrane protein YohJ.